The sequence spans 352 residues: Chalcone synthase C (352 aa).

Residue cysteine 170 is part of the active site.

This sequence belongs to the thiolase-like superfamily. Chalcone/stilbene synthases family.

The catalysed reaction is (E)-4-coumaroyl-CoA + 3 malonyl-CoA + 3 H(+) = 2',4,4',6'-tetrahydroxychalcone + 3 CO2 + 4 CoA. The protein operates within secondary metabolite biosynthesis; flavonoid biosynthesis. Its function is as follows. The primary product of this enzyme is 4,2',4',6'-tetrahydroxychalcone (also termed naringenin-chalcone or chalcone) which can under specific conditions spontaneously isomerize into naringenin. The chain is Chalcone synthase C (CHSC) from Ipomoea purpurea (Common morning glory).